The sequence spans 556 residues: 2-succinyl-5-enolpyruvyl-6-hydroxy-3-cyclohexene-1-carboxylate synthase (556 aa).

It belongs to the TPP enzyme family. MenD subfamily. In terms of assembly, homodimer. Mg(2+) is required as a cofactor. Mn(2+) serves as cofactor. Requires thiamine diphosphate as cofactor.

The catalysed reaction is isochorismate + 2-oxoglutarate + H(+) = 5-enolpyruvoyl-6-hydroxy-2-succinyl-cyclohex-3-ene-1-carboxylate + CO2. It participates in quinol/quinone metabolism; 1,4-dihydroxy-2-naphthoate biosynthesis; 1,4-dihydroxy-2-naphthoate from chorismate: step 2/7. The protein operates within quinol/quinone metabolism; menaquinone biosynthesis. Catalyzes the thiamine diphosphate-dependent decarboxylation of 2-oxoglutarate and the subsequent addition of the resulting succinic semialdehyde-thiamine pyrophosphate anion to isochorismate to yield 2-succinyl-5-enolpyruvyl-6-hydroxy-3-cyclohexene-1-carboxylate (SEPHCHC). The sequence is that of 2-succinyl-5-enolpyruvyl-6-hydroxy-3-cyclohexene-1-carboxylate synthase from Salmonella arizonae (strain ATCC BAA-731 / CDC346-86 / RSK2980).